We begin with the raw amino-acid sequence, 307 residues long: Elongation factor Ts (307 aa).

The involved in Mg(2+) ion dislocation from EF-Tu stretch occupies residues 79-82 (TDFV).

It belongs to the EF-Ts family.

It is found in the cytoplasm. Associates with the EF-Tu.GDP complex and induces the exchange of GDP to GTP. It remains bound to the aminoacyl-tRNA.EF-Tu.GTP complex up to the GTP hydrolysis stage on the ribosome. This is Elongation factor Ts from Bartonella bacilliformis (strain ATCC 35685 / KC583 / Herrer 020/F12,63).